A 351-amino-acid polypeptide reads, in one-letter code: Foldase protein PrsA 1 (351 aa).

A signal peptide spans 1–22; sequence MKNSNKLIASVVTLASVMALAA. The N-palmitoyl cysteine moiety is linked to residue cysteine 23. Cysteine 23 carries the S-diacylglycerol cysteine lipid modification. The PpiC domain maps to 145–240; sequence TPTMAVEMIT…KKFYIVKVTK (96 aa). 2 stretches are compositionally biased toward low complexity: residues 303 to 317 and 326 to 351; these read KTKAASESSTTSESS and ESEQTQTSSAEEPTETEAQTQEPAAQ. The segment at 303–351 is disordered; that stretch reads KTKAASESSTTSESSKAAEENPSESEQTQTSSAEEPTETEAQTQEPAAQ.

Belongs to the PrsA family.

The protein resides in the cell membrane. The catalysed reaction is [protein]-peptidylproline (omega=180) = [protein]-peptidylproline (omega=0). Functionally, plays a major role in protein secretion by helping the post-translocational extracellular folding of several secreted proteins. The sequence is that of Foldase protein PrsA 1 (prsA1) from Streptococcus pyogenes serotype M1.